Consider the following 684-residue polypeptide: Probable potassium transport system protein Kup (684 aa).

Transmembrane regions (helical) follow at residues 19-39 (ALLV…LYVM), 61-81 (VSLI…LIAL), 104-124 (WLVL…MLTP), 151-171 (QVIW…RFGT), 177-197 (AFGP…FIAL), 223-243 (MGLF…ALYS), 255-275 (LSWP…AVWL), 303-323 (LGAI…LISG), 352-372 (LYIP…IGYF), 381-401 (AYGL…YQYL), 407-427 (PAVI…VFFI), and 433-453 (FLHG…VMYV).

This sequence belongs to the HAK/KUP transporter (TC 2.A.72) family.

Its subcellular location is the cell membrane. The catalysed reaction is K(+)(in) + H(+)(in) = K(+)(out) + H(+)(out). Its function is as follows. Transport of potassium into the cell. Likely operates as a K(+):H(+) symporter. This chain is Probable potassium transport system protein Kup, found in Lacticaseibacillus casei (strain BL23) (Lactobacillus casei).